The sequence spans 227 residues: Cytidylate kinase (227 aa).

Position 10–18 (10–18 (GPSGSGKGT)) interacts with ATP.

It belongs to the cytidylate kinase family. Type 1 subfamily.

Its subcellular location is the cytoplasm. It catalyses the reaction CMP + ATP = CDP + ADP. It carries out the reaction dCMP + ATP = dCDP + ADP. This is Cytidylate kinase from Acinetobacter baylyi (strain ATCC 33305 / BD413 / ADP1).